Consider the following 347-residue polypeptide: S-adenosylmethionine:tRNA ribosyltransferase-isomerase (347 aa).

It belongs to the QueA family. As to quaternary structure, monomer.

It localises to the cytoplasm. It carries out the reaction 7-aminomethyl-7-carbaguanosine(34) in tRNA + S-adenosyl-L-methionine = epoxyqueuosine(34) in tRNA + adenine + L-methionine + 2 H(+). The protein operates within tRNA modification; tRNA-queuosine biosynthesis. In terms of biological role, transfers and isomerizes the ribose moiety from AdoMet to the 7-aminomethyl group of 7-deazaguanine (preQ1-tRNA) to give epoxyqueuosine (oQ-tRNA). The polypeptide is S-adenosylmethionine:tRNA ribosyltransferase-isomerase (Treponema denticola (strain ATCC 35405 / DSM 14222 / CIP 103919 / JCM 8153 / KCTC 15104)).